A 313-amino-acid chain; its full sequence is Porphobilinogen deaminase (313 aa).

Position 241 is an S-(dipyrrolylmethanemethyl)cysteine (cysteine 241).

It belongs to the HMBS family. Monomer. Requires dipyrromethane as cofactor.

It carries out the reaction 4 porphobilinogen + H2O = hydroxymethylbilane + 4 NH4(+). It functions in the pathway porphyrin-containing compound metabolism; protoporphyrin-IX biosynthesis; coproporphyrinogen-III from 5-aminolevulinate: step 2/4. It participates in porphyrin-containing compound metabolism; chlorophyll biosynthesis. Functionally, tetrapolymerization of the monopyrrole PBG into the hydroxymethylbilane pre-uroporphyrinogen in several discrete steps. The protein is Porphobilinogen deaminase of Chlorobium luteolum (strain DSM 273 / BCRC 81028 / 2530) (Pelodictyon luteolum).